The chain runs to 273 residues: Large ribosomal subunit protein uL2 (273 aa).

Disordered stretches follow at residues 28–55 (TPEKSLTRGKPAKAGRGAGGRISVRHRG) and 222–273 (GMAM…SKRK). Over residues 255–273 (YKTRKKRRVSDRFIVSKRK) the composition is skewed to basic residues.

Belongs to the universal ribosomal protein uL2 family. As to quaternary structure, part of the 50S ribosomal subunit. Forms a bridge to the 30S subunit in the 70S ribosome.

One of the primary rRNA binding proteins. Required for association of the 30S and 50S subunits to form the 70S ribosome, for tRNA binding and peptide bond formation. It has been suggested to have peptidyltransferase activity; this is somewhat controversial. Makes several contacts with the 16S rRNA in the 70S ribosome. This is Large ribosomal subunit protein uL2 from Treponema pallidum (strain Nichols).